The sequence spans 492 residues: 6-phosphogluconate dehydrogenase, decarboxylating (492 aa).

NADP(+) is bound by residues 13–18 (GLAVMG), 36–38 (NRT), 78–80 (VKA), and Asn106. Asn106 is a binding site for substrate. A Phosphoserine modification is found at Ser107. 132–134 (SGG) serves as a coordination point for substrate. Lys187 (proton acceptor) is an active-site residue. 190-191 (HN) is a binding site for substrate. The active-site Proton donor is the Glu194. A substrate-binding site is contributed by Tyr195. Ser215 is subject to Phosphoserine. Positions 264, 291, 449, and 455 each coordinate substrate.

Belongs to the 6-phosphogluconate dehydrogenase family. As to quaternary structure, homodimer.

The enzyme catalyses 6-phospho-D-gluconate + NADP(+) = D-ribulose 5-phosphate + CO2 + NADPH. Its pathway is carbohydrate degradation; pentose phosphate pathway; D-ribulose 5-phosphate from D-glucose 6-phosphate (oxidative stage): step 3/3. Catalyzes the oxidative decarboxylation of 6-phosphogluconate to ribulose 5-phosphate and CO(2), with concomitant reduction of NADP to NADPH. The polypeptide is 6-phosphogluconate dehydrogenase, decarboxylating (Schizosaccharomyces pombe (strain 972 / ATCC 24843) (Fission yeast)).